A 175-amino-acid polypeptide reads, in one-letter code: Co-chaperone protein HscB homolog (175 aa).

The J domain occupies 7 to 79 (SHFALFNLPE…LKRARYLLSL (73 aa)).

This sequence belongs to the HscB family. As to quaternary structure, interacts with HscA and stimulates its ATPase activity.

Functionally, co-chaperone involved in the maturation of iron-sulfur cluster-containing proteins. Seems to help targeting proteins to be folded toward HscA. This Paraburkholderia phymatum (strain DSM 17167 / CIP 108236 / LMG 21445 / STM815) (Burkholderia phymatum) protein is Co-chaperone protein HscB homolog.